A 105-amino-acid polypeptide reads, in one-letter code: Replication restart protein PriB (105 aa).

The region spanning 1 to 102 (MTANRLTLSG…LHAEQIELID (102 aa)) is the SSB domain.

The protein belongs to the PriB family. In terms of assembly, homodimer. Interacts with PriA and DnaT. Component of the replication restart primosome. Primosome assembly occurs via a 'hand-off' mechanism. PriA binds to replication forks, subsequently PriB then DnaT bind; DnaT then displaces ssDNA to generate the helicase loading substrate.

Involved in the restart of stalled replication forks, which reloads the replicative helicase on sites other than the origin of replication; the PriA-PriB pathway is the major replication restart pathway. During primosome assembly it facilitates complex formation between PriA and DnaT on DNA; stabilizes PriA on DNA. Stimulates the DNA unwinding activity of PriA helicase. This chain is Replication restart protein PriB, found in Erwinia tasmaniensis (strain DSM 17950 / CFBP 7177 / CIP 109463 / NCPPB 4357 / Et1/99).